We begin with the raw amino-acid sequence, 207 residues long: Imidazoleglycerol-phosphate dehydratase (207 aa).

It belongs to the imidazoleglycerol-phosphate dehydratase family.

The protein resides in the cytoplasm. The enzyme catalyses D-erythro-1-(imidazol-4-yl)glycerol 3-phosphate = 3-(imidazol-4-yl)-2-oxopropyl phosphate + H2O. It participates in amino-acid biosynthesis; L-histidine biosynthesis; L-histidine from 5-phospho-alpha-D-ribose 1-diphosphate: step 6/9. The protein is Imidazoleglycerol-phosphate dehydratase (hisB) of Azospirillum brasilense.